A 391-amino-acid chain; its full sequence is Phosphoglycerate kinase (391 aa).

Residues 21-23, Arg36, 59-62, Arg113, and Arg146 contribute to the substrate site; these read DLN and HLGR. ATP is bound by residues Lys197, Glu319, and 345-348; that span reads GGDT.

The protein belongs to the phosphoglycerate kinase family. As to quaternary structure, monomer.

It is found in the cytoplasm. The enzyme catalyses (2R)-3-phosphoglycerate + ATP = (2R)-3-phospho-glyceroyl phosphate + ADP. It participates in carbohydrate degradation; glycolysis; pyruvate from D-glyceraldehyde 3-phosphate: step 2/5. This is Phosphoglycerate kinase from Shewanella denitrificans (strain OS217 / ATCC BAA-1090 / DSM 15013).